Here is a 365-residue protein sequence, read N- to C-terminus: MAGNIFGQMFRIATWGESHGRAVGVVVDGLPAGLPFSEADIQKELDRRRPGQSEVSTPRSEADRVEILSGIFEGMSTGTPISMLVWNSDARSSSYDVIKNTPRPGHADFSYMARYGIRDHRGGGRSSARETIGRVAGGALAKLLLSRYGVRIAGHVLELGGIRAKPLSFEEILENVEKTPVRCADLEAAEKMLEKVATLRQEGDSVGGIVELIVKGVPAGLGEPVFDRLDADLSKALMSIPAVKGFEIGAGFEAARMRGSEMNDPFRMEQGEITCSKNNAGGILGGISTGLDIICRAAVKPTPSIGKVQQTVDLTTRENTEISIRGRHDPTIPPRMVPVAEAMVALVLSDHMLRSGFINPRTLLE.

A compositionally biased stretch (basic and acidic residues) spans 41–51; that stretch reads IQKELDRRRPG. The interval 41–62 is disordered; it reads IQKELDRRRPGQSEVSTPRSEA. Position 48 (arginine 48) interacts with NADP(+). FMN-binding positions include 125-127, glycine 285, 300-304, and arginine 327; these read RSS and KPTPS.

This sequence belongs to the chorismate synthase family. FMNH2 is required as a cofactor.

The catalysed reaction is 5-O-(1-carboxyvinyl)-3-phosphoshikimate = chorismate + phosphate. The protein operates within metabolic intermediate biosynthesis; chorismate biosynthesis; chorismate from D-erythrose 4-phosphate and phosphoenolpyruvate: step 7/7. Catalyzes the anti-1,4-elimination of the C-3 phosphate and the C-6 proR hydrogen from 5-enolpyruvylshikimate-3-phosphate (EPSP) to yield chorismate, which is the branch point compound that serves as the starting substrate for the three terminal pathways of aromatic amino acid biosynthesis. This reaction introduces a second double bond into the aromatic ring system. The protein is Chorismate synthase of Methanosarcina acetivorans (strain ATCC 35395 / DSM 2834 / JCM 12185 / C2A).